Reading from the N-terminus, the 215-residue chain is MNYASPRHAGPLDALLIEVDRALQVLSRSAVAGRAYPAHAAEAPLADTEKRHAAGLMRVNHVGEICAQALYRGQAVACRDAGTRELLREAAAEEVDHLVWCDRRLKELDSRPSLLNPLWYAGSFALGVAASVAGVPRNLGFMAETERQVEAHLDEHLRTLPAADERSREIVRQMKDDEAGHRESAERAGGIPLPAPVRGIMRAMSKVMTGTAYRL.

Positions 64, 94, 97, 146, 178, and 181 each coordinate Fe cation.

This sequence belongs to the COQ7 family. Requires Fe cation as cofactor.

The protein resides in the cell membrane. The catalysed reaction is a 5-methoxy-2-methyl-3-(all-trans-polyprenyl)benzene-1,4-diol + AH2 + O2 = a 3-demethylubiquinol + A + H2O. Its pathway is cofactor biosynthesis; ubiquinone biosynthesis. Its function is as follows. Catalyzes the hydroxylation of 2-nonaprenyl-3-methyl-6-methoxy-1,4-benzoquinol during ubiquinone biosynthesis. The sequence is that of 3-demethoxyubiquinol 3-hydroxylase from Bordetella avium (strain 197N).